A 219-amino-acid polypeptide reads, in one-letter code: Cytidylate kinase (219 aa).

15–23 (GPAASGKGT) provides a ligand contact to ATP.

This sequence belongs to the cytidylate kinase family. Type 1 subfamily.

It is found in the cytoplasm. The enzyme catalyses CMP + ATP = CDP + ADP. It catalyses the reaction dCMP + ATP = dCDP + ADP. The polypeptide is Cytidylate kinase (Brucella melitensis biotype 1 (strain ATCC 23456 / CCUG 17765 / NCTC 10094 / 16M)).